The following is a 162-amino-acid chain: MRRAVCPGSFDPITNGHLDIIVRASKLFDEVVVAVLINKSKAHLFTIEERIDLIRDAVRSHPDAPTNVVVDSSHGLLVDFCRVRGIQSIVKGLRAVSDFDYELQMAQMNHSLAGVETLFMSTNPQYAFLSSSLVKEVARYGGDVSGLVPDVVLKGLRDRSAP.

Serine 9 contacts substrate. Residues 9 to 10 and histidine 17 contribute to the ATP site; that span reads SF. Residues lysine 41, leucine 77, and lysine 91 each coordinate substrate. Residues 92 to 94, glutamate 102, and 126 to 132 each bind ATP; these read GLR and YAFLSSS.

Belongs to the bacterial CoaD family. As to quaternary structure, homohexamer. Requires Mg(2+) as cofactor.

It is found in the cytoplasm. It catalyses the reaction (R)-4'-phosphopantetheine + ATP + H(+) = 3'-dephospho-CoA + diphosphate. It participates in cofactor biosynthesis; coenzyme A biosynthesis; CoA from (R)-pantothenate: step 4/5. Reversibly transfers an adenylyl group from ATP to 4'-phosphopantetheine, yielding dephospho-CoA (dPCoA) and pyrophosphate. The chain is Phosphopantetheine adenylyltransferase from Parafrankia sp. (strain EAN1pec).